The primary structure comprises 125 residues: Glycine cleavage system H protein (125 aa).

Residues 19-101 (IATIGITDYA…MGDGWFIKLR (83 aa)) form the Lipoyl-binding domain. At lysine 60 the chain carries N6-lipoyllysine.

It belongs to the GcvH family. The glycine cleavage system is composed of four proteins: P, T, L and H. (R)-lipoate is required as a cofactor.

In terms of biological role, the glycine cleavage system catalyzes the degradation of glycine. The H protein shuttles the methylamine group of glycine from the P protein to the T protein. The sequence is that of Glycine cleavage system H protein from Parvibaculum lavamentivorans (strain DS-1 / DSM 13023 / NCIMB 13966).